We begin with the raw amino-acid sequence, 823 residues long: Leucine--tRNA ligase (823 aa).

Positions Pro42–His52 match the 'HIGH' region motif. A 'KMSKS' region motif is present at residues Lys575–Ser579. Residue Lys578 coordinates ATP.

Belongs to the class-I aminoacyl-tRNA synthetase family.

The protein localises to the cytoplasm. The enzyme catalyses tRNA(Leu) + L-leucine + ATP = L-leucyl-tRNA(Leu) + AMP + diphosphate. The protein is Leucine--tRNA ligase of Legionella pneumophila (strain Paris).